We begin with the raw amino-acid sequence, 106 residues long: uncharacterized protein (106 aa).

4 consecutive transmembrane segments (helical) span residues 3-23 (WFLL…MKYI), 29-49 (KWPI…LSQA), 50-70 (MIVL…SIGV), and 82-102 (FQLS…GLRL).

Belongs to the drug/metabolite transporter (DMT) superfamily. Small multidrug resistance (SMR) (TC 2.A.7.1) family.

It localises to the cell membrane. This is an uncharacterized protein from Bacillus subtilis (strain 168).